The chain runs to 244 residues: Sortase B (244 aa).

At 1 to 6 (MRMKRF) the chain is on the cytoplasmic side. Residues 7-24 (LTIVQILLVVIIIIFGYK) form a helical membrane-spanning segment. Residues 25–244 (IVQTYIEDKQ…VVVAKIIKVS (220 aa)) are Extracellular-facing. Cys-223 serves as the catalytic Acyl-thioester intermediate.

Belongs to the bacterial sortase family. Class B subfamily.

It localises to the cell membrane. It catalyses the reaction The enzyme catalyzes a cell wall sorting reaction in which a surface protein with a sorting signal containing a NPXTN motif is cleaved between the Thr and Asn residue. The resulting threonine carboxyl end of the protein is covalently attached to a pentaglycine cross-bridge of peptidoglycan.. With respect to regulation, inhibited by MTSET (2-(Trimethylammonium)-ethyl-methanethiosulfonate) and E64 ([n- (l-3-trans-carboxyoxirane-2-carbonyl)-l-leucyl]-amido(4-guanido)butane). Inhibited by coptisine. Transpeptidase that anchors surface proteins to the cell wall. Recognizes and modifies its substrate by proteolytic cleavage of a C-terminal sorting signal. Following cleavage, a covalent intermediate is formed via a thioester bond between the sortase and its substrate, which is then transferred and covalently attached to the cell wall. This sortase recognizes an Asn-Pro-Gln-Thr-Asn (NPQTN) motif in IsdC, which is cleaved by the sortase between the threonine and aspargine residues; may only have 1 substrate in this bacterium. May be dedicated to the process of iron acquisition during bacterial infection. The sequence is that of Sortase B from Staphylococcus aureus (strain NCTC 8325 / PS 47).